We begin with the raw amino-acid sequence, 977 residues long: RNA-binding protein 15 (977 aa).

Basic and acidic residues-rich tracts occupy residues 1-10, 35-52, 59-72, and 98-113; these read MRTAGRDPVP, RGDD…ERSP, RGGE…ERSK, and LHLD…REYD. The disordered stretch occupies residues 1–167; the sequence is MRTAGRDPVP…SSAPGGGDGA (167 aa). Position 109 is a phosphoserine (serine 109). The span at 119–130 shows a compositional bias: low complexity; sequence SSSRLHSYSSPS. Positions 135-150 are enriched in gly residues; it reads SGGGESRSSSRGGGGE. Residues 151–160 are compositionally biased toward low complexity; it reads SRSSGAASSA. Residues 170 to 252 form the RRM 1 domain; that stretch reads KTLKISELGS…RPLKIEAVYV (83 aa). Phosphoserine is present on residues serine 179, serine 208, and serine 210. Lysine 246 participates in a covalent cross-link: Glycyl lysine isopeptide (Lys-Gly) (interchain with G-Cter in SUMO2). Residues serine 253, serine 257, and serine 259 each carry the phosphoserine modification. The segment at 256–298 is disordered; that stretch reads RSRSPLDKDTYPPSASVVGASVGGHRHPPGGGGGQRSLSPGGA. Tyrosine 266 is modified (phosphotyrosine). Serine 292, serine 294, and serine 365 each carry phosphoserine. 2 consecutive RRM domains span residues 374-451 and 455-529; these read RTLF…YGKA and TRLW…FADT. Glycyl lysine isopeptide (Lys-Gly) (interchain with G-Cter in SUMO2) cross-links involve residues lysine 406, lysine 420, and lysine 445. Lysine 450 is subject to N6-acetyllysine. Composition is skewed to basic and acidic residues over residues 555 to 581 and 613 to 661; these read HRAP…RDLY and SLDR…ESDR. Positions 555-778 are disordered; it reads HRAPDPLRGA…KQDGGTAPVA (224 aa). A Phosphothreonine modification is found at threonine 568. Arginine 578 is subject to Asymmetric dimethylarginine; alternate; by PRMT1. At arginine 578 the chain carries Omega-N-methylarginine; alternate; by PRMT1. A phosphoserine mark is found at serine 622, serine 656, serine 670, serine 674, serine 700, and serine 741. Composition is skewed to basic and acidic residues over residues 673–728 and 741–750; these read RSPE…AERD and SPLKKEDRSD. Residue lysine 744 forms a Glycyl lysine isopeptide (Lys-Gly) (interchain with G-Cter in SUMO2) linkage. The span at 752–771 shows a compositional bias: polar residues; that stretch reads SAPSTSTASSKLKSPSQKQD. Serine 765, serine 767, and serine 781 each carry phosphoserine. Positions 777–956 constitute an SPOC domain; that stretch reads VASASPKLCL…YLVMIIVRGF (180 aa). The interval 865–884 is disordered; it reads GSSDSRSSSSSAASDTATST. A compositionally biased stretch (low complexity) spans 866–884; sequence SSDSRSSSSSAASDTATST. Serine 935 is modified (phosphoserine).

Belongs to the RRM Spen family. In terms of assembly, component of the WMM complex, a N6-methyltransferase complex composed of a catalytic subcomplex, named MAC, and of an associated subcomplex, named MACOM. The MAC subcomplex is composed of METTL3 and METTL14. The MACOM subcomplex is composed of WTAP, ZC3H13, CBLL1/HAKAI, VIRMA, and, in some cases of RBM15 (RBM15 or RBM15B). Also a component of a MACOM-like complex, named WTAP complex, composed of WTAP, ZC3H13, CBLL1, VIRMA, RBM15, BCLAF1 and THRAP3. Interacts with RBPJ. Interacts (via SPOC domain) with SETD1B. Interacts with NXF1, the interaction is required to promote mRNA export. Interacts with SF3B1. (Microbial infection) Interacts with Epstein-Barr virus BSFL2/BMLF1. In terms of processing, methylated at Arg-578 by PRMT1, leading to promote ubiquitination by CNOT4 and subsequent degradation by the proteasome. Ubiquitinated by CNOT4 following methylation at Arg-578 by PRMT1.

It localises to the nucleus speckle. The protein resides in the nucleus. It is found in the nucleoplasm. Its subcellular location is the nucleus envelope. The protein localises to the nucleus membrane. Functionally, RNA-binding protein that acts as a key regulator of N6-methyladenosine (m6A) methylation of RNAs, thereby regulating different processes, such as hematopoietic cell homeostasis, alternative splicing of mRNAs and X chromosome inactivation mediated by Xist RNA. Associated component of the WMM complex, a complex that mediates N6-methyladenosine (m6A) methylation of RNAs, a modification that plays a role in the efficiency of mRNA splicing and RNA processing. Plays a key role in m6A methylation, possibly by binding target RNAs and recruiting the WMM complex. Involved in random X inactivation mediated by Xist RNA: acts by binding Xist RNA and recruiting the WMM complex, which mediates m6A methylation, leading to target YTHDC1 reader on Xist RNA and promoting transcription repression activity of Xist. Required for the development of multiple tissues, such as the maintenance of the homeostasis of long-term hematopoietic stem cells and for megakaryocyte (MK) and B-cell differentiation. Regulates megakaryocyte differentiation by regulating alternative splicing of genes important for megakaryocyte differentiation; probably regulates alternative splicing via m6A regulation. Required for placental vascular branching morphogenesis and embryonic development of the heart and spleen. Acts as a regulator of thrombopoietin response in hematopoietic stem cells by regulating alternative splicing of MPL. May also function as an mRNA export factor, stimulating export and expression of RTE-containing mRNAs which are present in many retrotransposons that require to be exported prior to splicing. High affinity binding of pre-mRNA to RBM15 may allow targeting of the mRNP to the export helicase DBP5 in a manner that is independent of splicing-mediated NXF1 deposition, resulting in export prior to splicing. May be implicated in HOX gene regulation. This Homo sapiens (Human) protein is RNA-binding protein 15.